The chain runs to 554 residues: 3-(3-hydroxy-phenyl)propionate/3-hydroxycinnamic acid hydroxylase (554 aa).

Residues 17–46 (QVAI…LVEK) and 285–295 (FRIDRVLLAGD) contribute to the FAD site.

It belongs to the PheA/TfdB FAD monooxygenase family. It depends on FAD as a cofactor.

The catalysed reaction is 3-(3-hydroxyphenyl)propanoate + NADH + O2 + H(+) = 3-(2,3-dihydroxyphenyl)propanoate + NAD(+) + H2O. The enzyme catalyses (2E)-3-(3-hydroxyphenyl)prop-2-enoate + NADH + O2 + H(+) = (2E)-3-(2,3-dihydroxyphenyl)prop-2-enoate + NAD(+) + H2O. The protein operates within aromatic compound metabolism; 3-phenylpropanoate degradation. Catalyzes the insertion of one atom of molecular oxygen into position 2 of the phenyl ring of 3-(3-hydroxyphenyl)propionate (3-HPP) and hydroxycinnamic acid (3HCI). The chain is 3-(3-hydroxy-phenyl)propionate/3-hydroxycinnamic acid hydroxylase from Klebsiella pneumoniae (strain 342).